The sequence spans 357 residues: UDP-N-acetylglucosamine--N-acetylmuramyl-(pentapeptide) pyrophosphoryl-undecaprenol N-acetylglucosamine transferase (357 aa).

Residues 12 to 14 (TGG), Asn124, Arg162, Ser190, Ile243, 262 to 267 (ALTVAE), and Gln288 contribute to the UDP-N-acetyl-alpha-D-glucosamine site.

It belongs to the glycosyltransferase 28 family. MurG subfamily.

It is found in the cell inner membrane. It carries out the reaction di-trans,octa-cis-undecaprenyl diphospho-N-acetyl-alpha-D-muramoyl-L-alanyl-D-glutamyl-meso-2,6-diaminopimeloyl-D-alanyl-D-alanine + UDP-N-acetyl-alpha-D-glucosamine = di-trans,octa-cis-undecaprenyl diphospho-[N-acetyl-alpha-D-glucosaminyl-(1-&gt;4)]-N-acetyl-alpha-D-muramoyl-L-alanyl-D-glutamyl-meso-2,6-diaminopimeloyl-D-alanyl-D-alanine + UDP + H(+). It participates in cell wall biogenesis; peptidoglycan biosynthesis. Its function is as follows. Cell wall formation. Catalyzes the transfer of a GlcNAc subunit on undecaprenyl-pyrophosphoryl-MurNAc-pentapeptide (lipid intermediate I) to form undecaprenyl-pyrophosphoryl-MurNAc-(pentapeptide)GlcNAc (lipid intermediate II). In Alcanivorax borkumensis (strain ATCC 700651 / DSM 11573 / NCIMB 13689 / SK2), this protein is UDP-N-acetylglucosamine--N-acetylmuramyl-(pentapeptide) pyrophosphoryl-undecaprenol N-acetylglucosamine transferase.